The following is a 200-amino-acid chain: NAD(P)H dehydrogenase (quinone) (200 aa).

One can recognise a Flavodoxin-like domain in the interval 4-190; sequence VLVLYYSTYG…EGARFQGRHV (187 aa). Residues 10–15 and 78–80 contribute to the FMN site; these read STYGHV and TRY. NAD(+) is bound at residue Tyr12. Position 98 (Trp98) interacts with substrate. FMN is bound by residues 113 to 119 and His134; that span reads STASQHG.

It belongs to the WrbA family. FMN is required as a cofactor.

The catalysed reaction is a quinone + NADH + H(+) = a quinol + NAD(+). It catalyses the reaction a quinone + NADPH + H(+) = a quinol + NADP(+). The polypeptide is NAD(P)H dehydrogenase (quinone) (Methylobacterium radiotolerans (strain ATCC 27329 / DSM 1819 / JCM 2831 / NBRC 15690 / NCIMB 10815 / 0-1)).